Here is a 444-residue protein sequence, read N- to C-terminus: Homocysteine/cysteine synthase (444 aa).

At Ser44 the chain carries Phosphoserine. Lys160 is covalently cross-linked (Glycyl lysine isopeptide (Lys-Gly) (interchain with G-Cter in ubiquitin)). Position 209 is an N6-(pyridoxal phosphate)lysine (Lys209).

This sequence belongs to the trans-sulfuration enzymes family. In terms of assembly, homotetramer. Pyridoxal 5'-phosphate serves as cofactor.

The protein localises to the cytoplasm. It catalyses the reaction O-acetyl-L-homoserine + methanethiol = L-methionine + acetate + H(+). The catalysed reaction is O-acetyl-L-homoserine + hydrogen sulfide = L-homocysteine + acetate. It carries out the reaction O-acetyl-L-serine + hydrogen sulfide = L-cysteine + acetate. Its pathway is amino-acid biosynthesis; L-methionine biosynthesis via de novo pathway; L-homocysteine from O-acetyl-L-homoserine. Functionally, catalyzes the conversion of O-acetyl-L-homoserine (OAH) into homocysteine in the methionine biosynthesis pathway. Required to efficiently reduce toxic levels of hydrogen sulfide generated when the sulfate assimilation pathway (SAP) is active. Also catalyzes the conversion of O-acetylserine (OAS) into cysteine, the last step in the cysteine biosynthesis pathway. However, it seems that in S.cerevisiae cysteine biosynthesis occurs exclusively through the cystathionine pathway and not via direct incorporation of sulfur into OAS. It therefore has no metabolic role in cysteine biosynthesis and may only have a regulatory role controlling OAS levels. This is Homocysteine/cysteine synthase from Saccharomyces cerevisiae (strain ATCC 204508 / S288c) (Baker's yeast).